Reading from the N-terminus, the 210-residue chain is Ribosomal RNA large subunit methyltransferase E (210 aa).

The S-adenosyl-L-methionine site is built by Gly-61, Trp-63, Asp-81, Asp-97, and Asp-122. Lys-162 (proton acceptor) is an active-site residue.

It belongs to the class I-like SAM-binding methyltransferase superfamily. RNA methyltransferase RlmE family.

It is found in the cytoplasm. It carries out the reaction uridine(2552) in 23S rRNA + S-adenosyl-L-methionine = 2'-O-methyluridine(2552) in 23S rRNA + S-adenosyl-L-homocysteine + H(+). Its function is as follows. Specifically methylates the uridine in position 2552 of 23S rRNA at the 2'-O position of the ribose in the fully assembled 50S ribosomal subunit. This chain is Ribosomal RNA large subunit methyltransferase E, found in Xanthomonas oryzae pv. oryzae (strain MAFF 311018).